The primary structure comprises 115 residues: Nucleoid-associated protein Ccel_0243 (115 aa).

The protein belongs to the YbaB/EbfC family. In terms of assembly, homodimer.

The protein resides in the cytoplasm. Its subcellular location is the nucleoid. Functionally, binds to DNA and alters its conformation. May be involved in regulation of gene expression, nucleoid organization and DNA protection. This Ruminiclostridium cellulolyticum (strain ATCC 35319 / DSM 5812 / JCM 6584 / H10) (Clostridium cellulolyticum) protein is Nucleoid-associated protein Ccel_0243.